Here is a 396-residue protein sequence, read N- to C-terminus: Elongation factor Tu (396 aa).

Residues 11-205 (KPHVNIGTIG…IVDEYIPTPE (195 aa)) enclose the tr-type G domain. The G1 stretch occupies residues 20–27 (GHVDHGKT). Residue 20–27 (GHVDHGKT) coordinates GTP. Thr27 contributes to the Mg(2+) binding site. The interval 61–65 (GITIN) is G2. Residues 82-85 (DAPG) form a G3 region. GTP is bound by residues 82 to 86 (DAPGH) and 137 to 140 (NKCD). Positions 137 to 140 (NKCD) are G4. The tract at residues 175 to 177 (SAL) is G5.

This sequence belongs to the TRAFAC class translation factor GTPase superfamily. Classic translation factor GTPase family. EF-Tu/EF-1A subfamily. As to quaternary structure, monomer.

The protein localises to the cytoplasm. The enzyme catalyses GTP + H2O = GDP + phosphate + H(+). In terms of biological role, GTP hydrolase that promotes the GTP-dependent binding of aminoacyl-tRNA to the A-site of ribosomes during protein biosynthesis. This chain is Elongation factor Tu, found in Lactobacillus acidophilus (strain ATCC 700396 / NCK56 / N2 / NCFM).